A 446-amino-acid polypeptide reads, in one-letter code: Methylenetetrahydrofolate--tRNA-(uracil-5-)-methyltransferase TrmFO (446 aa).

Position 8–13 (8–13) interacts with FAD; it reads GAGLAG.

This sequence belongs to the MnmG family. TrmFO subfamily. Requires FAD as cofactor.

It localises to the cytoplasm. The enzyme catalyses uridine(54) in tRNA + (6R)-5,10-methylene-5,6,7,8-tetrahydrofolate + NADH + H(+) = 5-methyluridine(54) in tRNA + (6S)-5,6,7,8-tetrahydrofolate + NAD(+). The catalysed reaction is uridine(54) in tRNA + (6R)-5,10-methylene-5,6,7,8-tetrahydrofolate + NADPH + H(+) = 5-methyluridine(54) in tRNA + (6S)-5,6,7,8-tetrahydrofolate + NADP(+). Catalyzes the folate-dependent formation of 5-methyl-uridine at position 54 (M-5-U54) in all tRNAs. This chain is Methylenetetrahydrofolate--tRNA-(uracil-5-)-methyltransferase TrmFO, found in Paracoccus denitrificans (strain Pd 1222).